Here is a 63-residue protein sequence, read N- to C-terminus: ATP synthase F(0) complex subunit 8 (63 aa).

The helical transmembrane segment at 8-24 (MWLLTILSMLLTLFVLF) threads the bilayer. Residue lysine 57 is modified to N6-acetyllysine.

It belongs to the ATPase protein 8 family. In terms of assembly, component of the ATP synthase complex composed at least of ATP5F1A/subunit alpha, ATP5F1B/subunit beta, ATP5MC1/subunit c (homooctomer), MT-ATP6/subunit a, MT-ATP8/subunit 8, ATP5ME/subunit e, ATP5MF/subunit f, ATP5MG/subunit g, ATP5MK/subunit k, ATP5MJ/subunit j, ATP5F1C/subunit gamma, ATP5F1D/subunit delta, ATP5F1E/subunit epsilon, ATP5PF/subunit F6, ATP5PB/subunit b, ATP5PD/subunit d, ATP5PO/subunit OSCP. ATP synthase complex consists of a soluble F(1) head domain (subunits alpha(3) and beta(3)) - the catalytic core - and a membrane F(0) domain - the membrane proton channel (subunits c, a, 8, e, f, g, k and j). These two domains are linked by a central stalk (subunits gamma, delta, and epsilon) rotating inside the F1 region and a stationary peripheral stalk (subunits F6, b, d, and OSCP). Interacts with PRICKLE3.

The protein resides in the mitochondrion membrane. Its function is as follows. Subunit 8, of the mitochondrial membrane ATP synthase complex (F(1)F(0) ATP synthase or Complex V) that produces ATP from ADP in the presence of a proton gradient across the membrane which is generated by electron transport complexes of the respiratory chain. ATP synthase complex consist of a soluble F(1) head domain - the catalytic core - and a membrane F(1) domain - the membrane proton channel. These two domains are linked by a central stalk rotating inside the F(1) region and a stationary peripheral stalk. During catalysis, ATP synthesis in the catalytic domain of F(1) is coupled via a rotary mechanism of the central stalk subunits to proton translocation. In vivo, can only synthesize ATP although its ATP hydrolase activity can be activated artificially in vitro. Part of the complex F(0) domain. The sequence is that of ATP synthase F(0) complex subunit 8 from Balaenoptera physalus (Fin whale).